The primary structure comprises 601 residues: NADH-quinone oxidoreductase subunit C/D (601 aa).

Residues 1-192 form an NADH dehydrogenase I subunit C region; that stretch reads MIVPDLVADA…PPYSLTEDQE (192 aa). Positions 216-601 are NADH dehydrogenase I subunit D; it reads DFMFLNLGPN…IDFVMADVDR (386 aa).

The protein in the N-terminal section; belongs to the complex I 30 kDa subunit family. This sequence in the C-terminal section; belongs to the complex I 49 kDa subunit family. NDH-1 is composed of 13 different subunits. Subunits NuoB, CD, E, F, and G constitute the peripheral sector of the complex.

The protein resides in the cell inner membrane. The enzyme catalyses a quinone + NADH + 5 H(+)(in) = a quinol + NAD(+) + 4 H(+)(out). NDH-1 shuttles electrons from NADH, via FMN and iron-sulfur (Fe-S) centers, to quinones in the respiratory chain. The immediate electron acceptor for the enzyme in this species is believed to be ubiquinone. Couples the redox reaction to proton translocation (for every two electrons transferred, four hydrogen ions are translocated across the cytoplasmic membrane), and thus conserves the redox energy in a proton gradient. In Gluconacetobacter diazotrophicus (strain ATCC 49037 / DSM 5601 / CCUG 37298 / CIP 103539 / LMG 7603 / PAl5), this protein is NADH-quinone oxidoreductase subunit C/D.